A 628-amino-acid chain; its full sequence is MFNLMRLIHRSFSSSPTNYVLQTILPISQLCSNGRLQEALLEMAMLGPEMGFHGYDALLNACLDKRALRDGQRVHAHMIKTRYLPATYLRTRLLIFYGKCDCLEDARKVLDEMPEKNVVSWTAMISRYSQTGHSSEALTVFAEMMRSDGKPNEFTFATVLTSCIRASGLGLGKQIHGLIVKWNYDSHIFVGSSLLDMYAKAGQIKEAREIFECLPERDVVSCTAIIAGYAQLGLDEEALEMFHRLHSEGMSPNYVTYASLLTALSGLALLDHGKQAHCHVLRRELPFYAVLQNSLIDMYSKCGNLSYARRLFDNMPERTAISWNAMLVGYSKHGLGREVLELFRLMRDEKRVKPDAVTLLAVLSGCSHGRMEDTGLNIFDGMVAGEYGTKPGTEHYGCIVDMLGRAGRIDEAFEFIKRMPSKPTAGVLGSLLGACRVHLSVDIGESVGRRLIEIEPENAGNYVILSNLYASAGRWADVNNVRAMMMQKAVTKEPGRSWIQHEQTLHYFHANDRTHPRREEVLAKMKEISIKMKQAGYVPDLSCVLYDVDEEQKEKMLLGHSEKLALTFGLIATGEGIPIRVFKNLRICVDCHNFAKIFSKVFEREVSLRDKNRFHQIVDGICSCGDYW.

Residues 1–19 (MFNLMRLIHRSFSSSPTNY) constitute a mitochondrion transit peptide. PPR repeat units follow at residues 51–85 (GFHG…RYLP), 86–116 (ATYL…MPEK), 117–151 (NVVS…DGKP), 152–186 (NEFT…NYDS), 187–217 (HIFV…LPER), 218–252 (DVVS…GMSP), 253–287 (NYVT…ELPF), 288–318 (YAVL…MPER), 319–353 (TAIS…KRVK), 355–389 (DAVT…EYGT), and 392–422 (GTEH…MPSK). Positions 427–502 (VLGSLLGACR…EPGRSWIQHE (76 aa)) are type E motif. A type E(+) motif region spans residues 503 to 533 (QTLHYFHANDRTHPRREEVLAKMKEISIKMK). The segment at 534–628 (QAGYVPDLSC…DGICSCGDYW (95 aa)) is type DYW motif.

The protein belongs to the PPR family. PCMP-H subfamily.

The protein localises to the mitochondrion. The polypeptide is Putative pentatricopeptide repeat-containing protein At3g13770, mitochondrial (PCMP-H85) (Arabidopsis thaliana (Mouse-ear cress)).